The chain runs to 500 residues: Pentatricopeptide repeat-containing protein At1g05750, chloroplastic (500 aa).

Residues 1-54 (MGLLPVVGITSPALITHKNHANPKIQRHNQSTSETTVSWTSRINLLTRNGRLAE) constitute a chloroplast transit peptide. 10 PPR repeats span residues 35–69 (TTVS…GVEP), 70–106 (NHIT…GLDR), 108–138 (HVMV…MEDK), 139–173 (NSVT…DLIS), 174–204 (WTAM…GVKP), 205–239 (DYVA…DFKN), 240–270 (NVRV…MEKR), 271–305 (TVVS…GFKP), 306–336 (DAVT…MKCD), and 342–376 (RIEH…PNEV). The segment at 377–453 (VIGSLLAACS…QPGFSSIEID (77 aa)) is type E motif. The tract at residues 454–484 (DCMHVFMAGDNAHVETTYIREVLELISSDLR) is type E(+) motif.

It belongs to the PPR family. PCMP-E subfamily.

It is found in the plastid. The protein resides in the chloroplast. This chain is Pentatricopeptide repeat-containing protein At1g05750, chloroplastic (PDE247), found in Arabidopsis thaliana (Mouse-ear cress).